Consider the following 290-residue polypeptide: 33 kDa chaperonin (290 aa).

Disulfide bonds link C231–C233 and C263–C266.

It belongs to the HSP33 family. Under oxidizing conditions two disulfide bonds are formed involving the reactive cysteines. Under reducing conditions zinc is bound to the reactive cysteines and the protein is inactive.

The protein resides in the cytoplasm. In terms of biological role, redox regulated molecular chaperone. Protects both thermally unfolding and oxidatively damaged proteins from irreversible aggregation. Plays an important role in the bacterial defense system toward oxidative stress. This is 33 kDa chaperonin from Thermotoga petrophila (strain ATCC BAA-488 / DSM 13995 / JCM 10881 / RKU-1).